Reading from the N-terminus, the 96-residue chain is Small ribosomal subunit protein bS21 (96 aa).

A disordered region spans residues 52-96 (RRARKQARKTAIREGLIAAPKPKARPVSPRRPAAPAPASSPVGAA). Positions 69-96 (AAPKPKARPVSPRRPAAPAPASSPVGAA) are enriched in low complexity.

This sequence belongs to the bacterial ribosomal protein bS21 family.

This chain is Small ribosomal subunit protein bS21, found in Methylobacterium nodulans (strain LMG 21967 / CNCM I-2342 / ORS 2060).